The sequence spans 190 residues: GTP cyclohydrolase 1 (190 aa).

The Zn(2+) site is built by C80, H83, and C151.

It belongs to the GTP cyclohydrolase I family. In terms of assembly, toroid-shaped homodecamer, composed of two pentamers of five dimers.

It catalyses the reaction GTP + H2O = 7,8-dihydroneopterin 3'-triphosphate + formate + H(+). It functions in the pathway cofactor biosynthesis; 7,8-dihydroneopterin triphosphate biosynthesis; 7,8-dihydroneopterin triphosphate from GTP: step 1/1. The sequence is that of GTP cyclohydrolase 1 from Rickettsia felis (strain ATCC VR-1525 / URRWXCal2) (Rickettsia azadi).